The sequence spans 433 residues: 5-methylthioadenosine/S-adenosylhomocysteine deaminase (433 aa).

Histidine 62 and histidine 64 together coordinate Zn(2+). Residues glutamate 91, arginine 143, and histidine 183 each coordinate substrate. A Zn(2+)-binding site is contributed by histidine 210. Residues glutamate 213 and aspartate 298 each contribute to the substrate site. Aspartate 298 contacts Zn(2+).

This sequence belongs to the metallo-dependent hydrolases superfamily. MTA/SAH deaminase family. Zn(2+) serves as cofactor.

The enzyme catalyses S-adenosyl-L-homocysteine + H2O + H(+) = S-inosyl-L-homocysteine + NH4(+). It catalyses the reaction S-methyl-5'-thioadenosine + H2O + H(+) = S-methyl-5'-thioinosine + NH4(+). Functionally, catalyzes the deamination of 5-methylthioadenosine and S-adenosyl-L-homocysteine into 5-methylthioinosine and S-inosyl-L-homocysteine, respectively. Is also able to deaminate adenosine. The sequence is that of 5-methylthioadenosine/S-adenosylhomocysteine deaminase from Caldanaerobacter subterraneus subsp. tengcongensis (strain DSM 15242 / JCM 11007 / NBRC 100824 / MB4) (Thermoanaerobacter tengcongensis).